A 517-amino-acid polypeptide reads, in one-letter code: RNA-binding region-containing protein 3 (517 aa).

The segment at 1–26 (MAAPEQPLAISRGCTSSSSLSPPRGD) is disordered. Serine 21 carries the phosphoserine modification. One can recognise an RRM 1 domain in the interval 27-102 (RTLLVRHLPA…HTLVVEFAKE (76 aa)). 2 disordered regions span residues 106-130 (VHSP…DDKE) and 213-254 (MPLH…DEDR). Serine 108 bears the Phosphoserine mark. Over residues 115 to 130 (SEKKKRSDDPVEDDKE) the composition is skewed to basic and acidic residues. Pro residues predominate over residues 217–230 (APLPPTSPQPPEEP). Acidic residues predominate over residues 231–252 (PLPEEDEELSSEESEYESTDDE). Residues 420–503 (CRIYVKNLAK…KPMVVQFARS (84 aa)) form the RRM 2 domain.

Component of the U11/U12 snRNPs that are part of the U12-type spliceosome. Found in a complex with m(7)G-capped U12 snRNA. Interacts with PDCD7.

It is found in the nucleus. In terms of biological role, participates in pre-mRNA U12-dependent splicing, performed by the minor spliceosome which removes U12-type introns. U12-type introns comprises less than 1% of all non-coding sequences. Binds to the 3'-stem-loop of m(7)G-capped U12 snRNA. The protein is RNA-binding region-containing protein 3 (RNPC3) of Pongo abelii (Sumatran orangutan).